Consider the following 354-residue polypeptide: Guanine nucleotide-binding protein G(o) subunit alpha (354 aa).

Residue Gly-2 is the site of N-myristoyl glycine attachment. Cys-3 is lipidated: S-palmitoyl cysteine. The 323-residue stretch at 32-354 (KDVKLLLLGA…AYNLRGCGLY (323 aa)) folds into the G-alpha domain. The tract at residues 35-48 (KLLLLGAGESGKST) is G1 motif. 9 residues coordinate GTP: Glu-43, Lys-46, Ser-47, Thr-48, Ser-152, Leu-176, Arg-177, Thr-178, and Arg-179. Mg(2+) is bound at residue Ser-47. The segment at 174–182 (DILRTRVKT) is G2 motif. Thr-182 contacts Mg(2+). The tract at residues 197-206 (FRLFDVGGQR) is G3 motif. The segment at 266–273 (ILFLNKKD) is G4 motif. GTP-binding residues include Asn-270, Asp-273, and Cys-325. Residues 324–329 (TCATDT) are G5 motif.

It belongs to the G-alpha family. G(i/o/t/z) subfamily. In terms of assembly, g proteins are composed of 3 units; alpha, beta and gamma.

The catalysed reaction is GTP + H2O = GDP + phosphate + H(+). Its function is as follows. Guanine nucleotide-binding proteins (G proteins) function as transducers downstream of G protein-coupled receptors (GPCRs) in numerous signaling cascades. The alpha chain contains the guanine nucleotide binding site and alternates between an active, GTP-bound state and an inactive, GDP-bound state. Signaling by an activated GPCR promotes GDP release and GTP binding. The alpha subunit has a low GTPase activity that converts bound GTP to GDP, thereby terminating the signal. Both GDP release and GTP hydrolysis are modulated by numerous regulatory proteins. Signaling is mediated via effector proteins, such as adenylate cyclase. Inhibits adenylate cyclase activity, leading to decreased intracellular cAMP levels. The sequence is that of Guanine nucleotide-binding protein G(o) subunit alpha (gna0) from Xenopus laevis (African clawed frog).